The following is a 245-amino-acid chain: Bis(5'-nucleosyl)-tetraphosphatase PrpE [asymmetrical] (245 aa).

This sequence belongs to the PrpE family. The cofactor is Ni(2+).

The enzyme catalyses P(1),P(4)-bis(5'-guanosyl) tetraphosphate + H2O = GMP + GTP + 2 H(+). In terms of biological role, asymmetrically hydrolyzes Ap4p to yield AMP and ATP. This chain is Bis(5'-nucleosyl)-tetraphosphatase PrpE [asymmetrical], found in Anoxybacillus flavithermus (strain DSM 21510 / WK1).